The chain runs to 100 residues: uncharacterized protein (100 aa).

2 helical membrane passes run 50 to 70 and 75 to 95; these read LLIF…FSLF and DVFL…SPEV.

The protein resides in the membrane. This is an uncharacterized protein from Saccharomyces cerevisiae (strain ATCC 204508 / S288c) (Baker's yeast).